A 327-amino-acid polypeptide reads, in one-letter code: 2-oxoglutarate-dependent dioxygenase traH (327 aa).

The 108-residue stretch at T183–D290 folds into the Fe2OG dioxygenase domain. Fe cation is bound by residues H211, D213, and H270. R280 lines the 2-oxoglutarate pocket.

Belongs to the iron/ascorbate-dependent oxidoreductase family. Fe(2+) serves as cofactor.

The protein operates within secondary metabolite biosynthesis. 2-oxoglutarate-dependent dioxygenase; part of the tra gene cluster that produces terrestric acid. The clavatol biosynthesis cluster cla and the terrestric acid cluster tra are both involved in the production of peniphenones and penilactones. The non-reducing PKS claF is responsible for the formation of clavatol from successive condensations of 3 malonyl-CoA units, presumably with a simple acetyl-CoA starter unit, and 2 methylation steps. The esterase claE probably collaborates with claF by catalyzing the hydrolysis of ACP-bound acyl intermediates to free the ACP from stalled intermediates. The clavatol oxidase claD then converts clavatol to hydroxyclavatol. Spontaneous dehydration of hydroxyclavatol leads to the accumulation of the highly active ortho-quinone methide. On the other hand, the PKS-NRPS hybrid traA is involved in the formation of crustosic acid, with the help of traB and traD. The polyketide synthase module (PKS) of traA is responsible for the synthesis of the polyketide backbone via the condensation of an acetyl-CoA starter unit with 3 malonyl-CoA units. The downstream nonribosomal peptide synthetase (NRPS) module then amidates the carboxyl end of the polyketide with L-malic acid. Because traA lacks a designated enoylreductase (ER) domain, the required activity is provided the enoyl reductase traG. Crustosic acid undergoes decarboxylation and isomerization to the terrestric acid, catalyzed by the 2-oxoglutarate-dependent dioxygenase traH. Both acids are further converted to the 2 gamma-butyrolactones (R)-5-methyltetronic acid and (S)-5-carboxylmethyltetronic acid, with involvement of the cytochrome P450 monooxygenase claJ. Spontaneous addition of the methide to these gamma-butyrolactones leads to peniphenone D and penilactone D, which undergo again stereospecific attacking by methide to give penilactones A and B. The polypeptide is 2-oxoglutarate-dependent dioxygenase traH (Penicillium crustosum (Blue mold fungus)).